Consider the following 255-residue polypeptide: Zinc import ATP-binding protein ZnuC (255 aa).

The ABC transporter domain maps to valine 5 to arginine 220.

The protein belongs to the ABC transporter superfamily. Zinc importer (TC 3.A.1.15.5) family. The complex is composed of two ATP-binding proteins (ZnuC), two transmembrane proteins (ZnuB) and a solute-binding protein (ZnuA).

It localises to the cell inner membrane. The catalysed reaction is Zn(2+)(out) + ATP(in) + H2O(in) = Zn(2+)(in) + ADP(in) + phosphate(in) + H(+)(in). Part of the ABC transporter complex ZnuABC involved in zinc import. Responsible for energy coupling to the transport system. In Sodalis glossinidius (strain morsitans), this protein is Zinc import ATP-binding protein ZnuC.